A 167-amino-acid polypeptide reads, in one-letter code: 2-amino-4-hydroxy-6-hydroxymethyldihydropteridine pyrophosphokinase (167 aa).

The protein belongs to the HPPK family.

The catalysed reaction is 6-hydroxymethyl-7,8-dihydropterin + ATP = (7,8-dihydropterin-6-yl)methyl diphosphate + AMP + H(+). It participates in cofactor biosynthesis; tetrahydrofolate biosynthesis; 2-amino-4-hydroxy-6-hydroxymethyl-7,8-dihydropteridine diphosphate from 7,8-dihydroneopterin triphosphate: step 4/4. Its function is as follows. Catalyzes the transfer of pyrophosphate from adenosine triphosphate (ATP) to 6-hydroxymethyl-7,8-dihydropterin, an enzymatic step in folate biosynthesis pathway. The chain is 2-amino-4-hydroxy-6-hydroxymethyldihydropteridine pyrophosphokinase (folK) from Bacillus subtilis (strain 168).